The chain runs to 552 residues: Thermosome subunit beta (552 aa).

It belongs to the TCP-1 chaperonin family. As to quaternary structure, forms a Heterooligomeric complex of two stacked nine-membered rings; one of alpha and the other of beta subunits. The N-terminus is blocked.

In terms of biological role, molecular chaperone; binds unfolded polypeptides in vitro, and has a weak ATPase activity. This chain is Thermosome subunit beta (thsB), found in Sulfurisphaera tokodaii (strain DSM 16993 / JCM 10545 / NBRC 100140 / 7) (Sulfolobus tokodaii).